The chain runs to 145 residues: D-aminoacyl-tRNA deacylase (145 aa).

A Gly-cisPro motif, important for rejection of L-amino acids motif is present at residues 137–138 (GP).

Belongs to the DTD family. In terms of assembly, homodimer.

The protein resides in the cytoplasm. It carries out the reaction glycyl-tRNA(Ala) + H2O = tRNA(Ala) + glycine + H(+). The enzyme catalyses a D-aminoacyl-tRNA + H2O = a tRNA + a D-alpha-amino acid + H(+). An aminoacyl-tRNA editing enzyme that deacylates mischarged D-aminoacyl-tRNAs. Also deacylates mischarged glycyl-tRNA(Ala), protecting cells against glycine mischarging by AlaRS. Acts via tRNA-based rather than protein-based catalysis; rejects L-amino acids rather than detecting D-amino acids in the active site. By recycling D-aminoacyl-tRNA to D-amino acids and free tRNA molecules, this enzyme counteracts the toxicity associated with the formation of D-aminoacyl-tRNA entities in vivo and helps enforce protein L-homochirality. The polypeptide is D-aminoacyl-tRNA deacylase (Limosilactobacillus reuteri (strain DSM 20016) (Lactobacillus reuteri)).